The primary structure comprises 197 residues: Cell division protein SepF (197 aa).

Disordered stretches follow at residues 38–72 (MPTPLPEESAPAPRRLPENPTVASNFAMNSNTTPT) and 164–197 (LSREETPATPAAPARPAAPAPAWSDEMTPMAQAQ). The span at 58 to 72 (TVASNFAMNSNTTPT) shows a compositional bias: polar residues. A compositionally biased stretch (low complexity) spans 170–185 (PATPAAPARPAAPAPA).

Belongs to the SepF family. As to quaternary structure, homodimer. Interacts with FtsZ.

It is found in the cytoplasm. Functionally, cell division protein that is part of the divisome complex and is recruited early to the Z-ring. Probably stimulates Z-ring formation, perhaps through the cross-linking of FtsZ protofilaments. Its function overlaps with FtsA. The protein is Cell division protein SepF of Picosynechococcus sp. (strain ATCC 27264 / PCC 7002 / PR-6) (Agmenellum quadruplicatum).